A 222-amino-acid chain; its full sequence is Small ribosomal subunit protein uS3 (222 aa).

The KH type-2 domain maps to 39–108 (IRKFVKNKLS…NVLINIVEVK (70 aa)).

Belongs to the universal ribosomal protein uS3 family. Part of the 30S ribosomal subunit. Forms a tight complex with proteins S10 and S14.

Binds the lower part of the 30S subunit head. Binds mRNA in the 70S ribosome, positioning it for translation. The polypeptide is Small ribosomal subunit protein uS3 (Clostridium acetobutylicum (strain ATCC 824 / DSM 792 / JCM 1419 / IAM 19013 / LMG 5710 / NBRC 13948 / NRRL B-527 / VKM B-1787 / 2291 / W)).